Consider the following 345-residue polypeptide: Phosphoribosylformylglycinamidine cyclo-ligase (345 aa).

Belongs to the AIR synthase family.

It is found in the cytoplasm. The catalysed reaction is 2-formamido-N(1)-(5-O-phospho-beta-D-ribosyl)acetamidine + ATP = 5-amino-1-(5-phospho-beta-D-ribosyl)imidazole + ADP + phosphate + H(+). It participates in purine metabolism; IMP biosynthesis via de novo pathway; 5-amino-1-(5-phospho-D-ribosyl)imidazole from N(2)-formyl-N(1)-(5-phospho-D-ribosyl)glycinamide: step 2/2. In Shouchella clausii (strain KSM-K16) (Alkalihalobacillus clausii), this protein is Phosphoribosylformylglycinamidine cyclo-ligase.